Here is a 392-residue protein sequence, read N- to C-terminus: Phosphoglycerate kinase (392 aa).

Substrate contacts are provided by residues 21–23, Arg36, 59–62, Arg113, and Arg146; these read DFN and HLGR. ATP-binding positions include Lys197, Glu319, and 345–348; that span reads GGDT.

This sequence belongs to the phosphoglycerate kinase family. In terms of assembly, monomer.

The protein localises to the cytoplasm. It catalyses the reaction (2R)-3-phosphoglycerate + ATP = (2R)-3-phospho-glyceroyl phosphate + ADP. It participates in carbohydrate degradation; glycolysis; pyruvate from D-glyceraldehyde 3-phosphate: step 2/5. This Francisella philomiragia subsp. philomiragia (strain ATCC 25017 / CCUG 19701 / FSC 153 / O#319-036) protein is Phosphoglycerate kinase.